The following is a 205-amino-acid chain: Guanylate kinase (205 aa).

Residues 6–184 (GLLLVVSGPS…SAKEIEGIIS (179 aa)) enclose the Guanylate kinase-like domain. 13 to 20 (GPSGAGKG) contacts ATP.

This sequence belongs to the guanylate kinase family.

It is found in the cytoplasm. The catalysed reaction is GMP + ATP = GDP + ADP. Essential for recycling GMP and indirectly, cGMP. This chain is Guanylate kinase, found in Clostridioides difficile (strain 630) (Peptoclostridium difficile).